The chain runs to 549 residues: Chaperonin GroEL (549 aa).

Residues 30 to 33 (TLGP), K51, 87 to 91 (DGTTT), G415, 479 to 481 (NAA), and D495 contribute to the ATP site.

The protein belongs to the chaperonin (HSP60) family. As to quaternary structure, forms a cylinder of 14 subunits composed of two heptameric rings stacked back-to-back. Interacts with the co-chaperonin GroES.

Its subcellular location is the cytoplasm. It carries out the reaction ATP + H2O + a folded polypeptide = ADP + phosphate + an unfolded polypeptide.. Together with its co-chaperonin GroES, plays an essential role in assisting protein folding. The GroEL-GroES system forms a nano-cage that allows encapsulation of the non-native substrate proteins and provides a physical environment optimized to promote and accelerate protein folding. The sequence is that of Chaperonin GroEL from Leptothrix cholodnii (strain ATCC 51168 / LMG 8142 / SP-6) (Leptothrix discophora (strain SP-6)).